The primary structure comprises 270 residues: Catechol 1,2-dioxygenase (270 aa).

4 residues coordinate Fe cation: Tyr152, Tyr186, His210, and His212.

The protein belongs to the intradiol ring-cleavage dioxygenase family. Fe(3+) is required as a cofactor.

It carries out the reaction catechol + O2 = cis,cis-muconate + 2 H(+). The chain is Catechol 1,2-dioxygenase (catA) from Rhodococcus opacus (Nocardia opaca).